We begin with the raw amino-acid sequence, 508 residues long: General transcription factor IIF subunit 1 (508 aa).

The residue at position 2 (Ala2) is an N-acetylalanine. Thr156 bears the Phosphothreonine mark. Positions 177 to 446 are disordered; that stretch reads MQQRRLKDQD…TPSSGDVQVT (270 aa). Ser217, Ser218, Ser221, and Ser224 each carry phosphoserine. Residues 232–251 are compositionally biased toward basic residues; sequence SKAKKKAPVTKAGRKKKKKK. Composition is skewed to acidic residues over residues 255–270 and 303–325; these read DEAF…EGQE and EQSE…EEEE. Thr331 carries the post-translational modification Phosphothreonine. Acidic residues predominate over residues 343-355; sequence DDSDSSEESDIDS. Positions 364-374 are enriched in basic residues; it reads AKKKTPPKRER. Phosphoserine is present on residues Ser377, Ser380, Ser381, and Ser385. Over residues 378–388 the composition is skewed to polar residues; sequence GGSSKGTSRPG. A Phosphothreonine modification is found at Thr389. Residues 389-406 are compositionally biased toward low complexity; the sequence is TPSAEAASTSSTLRAAAS. Residue Ser391 is modified to Phosphoserine. Residue Lys407 is modified to N6-acetyllysine. Polar residues predominate over residues 428-443; sequence GPQSLSGKSTPSSGDV. Phosphoserine is present on residues Ser431, Ser433, and Ser436. Phosphothreonine is present on Thr437. Ser440 carries the post-translational modification Phosphoserine.

This sequence belongs to the TFIIF alpha subunit family. In terms of assembly, heterodimer of an alpha and a beta subunit. Interacts with GTF2F2, CTDP1, TAF6/TAFII80 and URI1. Interacts with GTF2B (via C-terminus and preferentially via acetylated form); this interaction prevents binding of GTF2B to GTF2F2. Part of TBP-based Pol II pre-initiation complex (PIC), in which Pol II core assembles with general transcription factors and other specific initiation factors including GTF2E1, GTF2E2, GTF2F1, GTF2F2, TCEA1, ERCC2, ERCC3, GTF2H2, GTF2H3, GTF2H4, GTF2H5, GTF2A1, GTF2A2, GTF2B and TBP; this large multi-subunit PIC complex mediates DNA unwinding and targets Pol II core to the transcription start site where the first phosphodiester bond forms. Post-translationally, phosphorylated on Ser and other residues by TAF1 and casein kinase II-like kinases.

It is found in the nucleus. Its function is as follows. TFIIF is a general transcription initiation factor that binds to RNA polymerase II and helps to recruit it to the initiation complex in collaboration with TFIIB. It promotes transcription elongation. This Mus musculus (Mouse) protein is General transcription factor IIF subunit 1 (Gtf2f1).